The following is a 338-amino-acid chain: 3 beta-hydroxysteroid dehydrogenase type 7 (338 aa).

Catalysis depends on Y159, which acts as the Proton acceptor. Residue K163 coordinates NAD(+). 2 consecutive transmembrane segments (helical) span residues 258 to 278 and 280 to 300; these read LLPYWLLVLLTALNALLQWLL and PLVLYTPLLNPYTLAVANTTF.

This sequence belongs to the 3-beta-HSD family. As to expression, high levels in liver and lung, moderate levels in spleen, brain, heart, kidney, jejunum and testis. Up-regulated in 3Y1 cells upon growth arrest.

It localises to the endoplasmic reticulum membrane. It carries out the reaction 7alpha-hydroxycholesterol + NAD(+) = 7alpha-hydroxycholest-4-en-3-one + NADH + H(+). It catalyses the reaction 7alpha,25-dihydroxycholesterol + NAD(+) = 7alpha,25-dihydroxy-4-cholesten-3-one + NADH + H(+). The catalysed reaction is (25R)-cholest-5-en-3beta,7alpha,26-triol + NAD(+) = (25R)-7alpha,26-dihydroxycholest-4-en-3-one + NADH + H(+). The enzyme catalyses (24S)-7alpha-dihydroxycholesterol + NAD(+) = (24S)-7alpha,24-dihydroxycholest-4-en-3-one + NADH + H(+). Its pathway is lipid metabolism; steroid biosynthesis. In terms of biological role, the 3-beta-HSD enzymatic system plays a crucial role in the biosynthesis of all classes of hormonal steroids. HSD VII is active against four 7-alpha-hydroxylated sterols. Does not metabolize several different C(19/21) steroids as substrates. Involved in bile acid synthesis. Plays a key role in cell positioning and movement in lymphoid tissues by mediating degradation of 7-alpha,25-dihydroxycholesterol (7-alpha,25-OHC): 7-alpha,25-OHC acts as a ligand for the G protein-coupled receptor GPR183/EBI2, a chemotactic receptor for a number of lymphoid cells. The protein is 3 beta-hydroxysteroid dehydrogenase type 7 of Rattus norvegicus (Rat).